We begin with the raw amino-acid sequence, 1086 residues long: DNA polymerase (1086 aa).

The segment at 638–657 (STTRKPVDDVEEHSECNGFT) is disordered.

The protein belongs to the DNA polymerase type-B family.

It catalyses the reaction DNA(n) + a 2'-deoxyribonucleoside 5'-triphosphate = DNA(n+1) + diphosphate. In terms of biological role, replicates the viral genome. Host DNA polymerases cannot substitute for the viral enzyme in this process. This Noctuidae (owlet moths) protein is DNA polymerase.